Here is a 46-residue protein sequence, read N- to C-terminus: Mu-hexatoxin-Mg2a (46 aa).

5 disulfides stabilise this stretch: Cys3–Cys18, Cys10–Cys24, Cys17–Cys36, Cys21–Cys43, and Cys26–Cys34.

Belongs to the neurotoxin 02 (plectoxin) family. 02 (plectoxin) subfamily. Expressed by the venom gland.

It localises to the secreted. Functionally, competes for binding at site 3 of the insect voltage-gated sodium channel (Nav). Insecticidal neurotoxin. Causes temporary paralysis to lepidopteran larvae (10.3 nmol/g) or to crickets (doses from 0.93 to 119 ug/g). Is not toxic to mice when injected intracranially (high doses). In Macrothele gigas (Japanese funnel web spider), this protein is Mu-hexatoxin-Mg2a.